The primary structure comprises 326 residues: Transcription cofactor vestigial-like protein 3 (326 aa).

Positions 54 to 82 (SLEVTLPSKQEEEEEEEEDEEEEEKDQPA) are disordered. K62 participates in a covalent cross-link: Glycyl lysine isopeptide (Lys-Gly) (interchain with G-Cter in SUMO2). Positions 64 to 78 (EEEEEEEEDEEEEEK) are enriched in acidic residues. K129 is covalently cross-linked (Glycyl lysine isopeptide (Lys-Gly) (interchain with G-Cter in SUMO2)). Positions 184-208 (TADPNSWPGHGLHQTGPAPPPTASE) are disordered.

The protein belongs to the vestigial family.

The protein resides in the nucleus. In terms of biological role, may act as a specific coactivator for the mammalian TEFs. This Mus musculus (Mouse) protein is Transcription cofactor vestigial-like protein 3.